The sequence spans 428 residues: Enolase (428 aa).

Q163 is a (2R)-2-phosphoglycerate binding site. The active-site Proton donor is the E205. Positions 242, 286, and 313 each coordinate Mg(2+). (2R)-2-phosphoglycerate-binding residues include K338, R367, S368, and K389. The active-site Proton acceptor is the K338.

The protein belongs to the enolase family. Mg(2+) is required as a cofactor.

The protein resides in the cytoplasm. Its subcellular location is the secreted. The protein localises to the cell surface. It catalyses the reaction (2R)-2-phosphoglycerate = phosphoenolpyruvate + H2O. It participates in carbohydrate degradation; glycolysis; pyruvate from D-glyceraldehyde 3-phosphate: step 4/5. Functionally, catalyzes the reversible conversion of 2-phosphoglycerate (2-PG) into phosphoenolpyruvate (PEP). It is essential for the degradation of carbohydrates via glycolysis. This chain is Enolase, found in Bordetella petrii (strain ATCC BAA-461 / DSM 12804 / CCUG 43448).